Here is a 343-residue protein sequence, read N- to C-terminus: Aspartate-semialdehyde dehydrogenase (343 aa).

Residues 20 to 23 (SGAV) and 48 to 49 (RS) each bind NADP(+). R108 is a phosphate binding site. C137 serves as the catalytic Acyl-thioester intermediate. Q164 contacts substrate. Residue 167–168 (SG) coordinates NADP(+). K221 is a binding site for phosphate. Position 243 (R243) interacts with substrate. The active-site Proton acceptor is H250. Residue Q323 participates in NADP(+) binding.

It belongs to the aspartate-semialdehyde dehydrogenase family. In terms of assembly, homodimer.

It catalyses the reaction L-aspartate 4-semialdehyde + phosphate + NADP(+) = 4-phospho-L-aspartate + NADPH + H(+). The protein operates within amino-acid biosynthesis; L-lysine biosynthesis via DAP pathway; (S)-tetrahydrodipicolinate from L-aspartate: step 2/4. Its pathway is amino-acid biosynthesis; L-methionine biosynthesis via de novo pathway; L-homoserine from L-aspartate: step 2/3. It functions in the pathway amino-acid biosynthesis; L-threonine biosynthesis; L-threonine from L-aspartate: step 2/5. Its function is as follows. Catalyzes the NADPH-dependent formation of L-aspartate-semialdehyde (L-ASA) by the reductive dephosphorylation of L-aspartyl-4-phosphate. In Prochlorococcus marinus (strain SARG / CCMP1375 / SS120), this protein is Aspartate-semialdehyde dehydrogenase.